The following is a 245-amino-acid chain: 5'-nucleotidase SurE (245 aa).

The a divalent metal cation site is built by aspartate 8, aspartate 9, serine 39, and asparagine 91.

Belongs to the SurE nucleotidase family. A divalent metal cation is required as a cofactor.

The protein resides in the cytoplasm. The enzyme catalyses a ribonucleoside 5'-phosphate + H2O = a ribonucleoside + phosphate. In terms of biological role, nucleotidase that shows phosphatase activity on nucleoside 5'-monophosphates. In Herminiimonas arsenicoxydans, this protein is 5'-nucleotidase SurE.